Consider the following 556-residue polypeptide: Beta-hexosaminidase subunit beta (556 aa).

Positions 1 to 42 (MELCGLGLPRPPMLLALLLATLLAAMLALLTQVALVVQVAEA) are cleaved as a signal peptide. The propeptide occupies 43–121 (ARAPSVSAKP…HHEPAEFQAK (79 aa)). A glycan (N-linked (GlcNAc...) asparagine) is linked at Asn84. Cysteines 91 and 137 form a disulfide. 3 N-linked (GlcNAc...) asparagine glycosylation sites follow: Asn142, Asn190, and Asn327. Disulfide bonds link Cys309/Cys360 and Cys534/Cys551. The Proton donor role is filled by Glu355.

This sequence belongs to the glycosyl hydrolase 20 family. There are 3 forms of beta-hexosaminidase: hexosaminidase A is a heterodimer composed of one subunit alpha and one subunit beta (chain A and B); hexosaminidase B is a homodimer of two beta subunits (two chains A and B); hexosaminidase S is a homodimer of two alpha subunits. The composition of the dimer (isozyme A versus isozyme S) has a significant effect on the substrate specificity of the alpha subunit active site. N-linked glycans at Asn-142 and Asn-190 consist of Man(3)-GlcNAc(2) and Man(5 to 7)-GlcNAc(2), respectively. Post-translationally, the beta-A and beta-B chains are produced by proteolytic processing of the precursor beta chain.

Its subcellular location is the lysosome. The protein resides in the cytoplasmic vesicle. It is found in the secretory vesicle. It localises to the cortical granule. The enzyme catalyses Hydrolysis of terminal non-reducing N-acetyl-D-hexosamine residues in N-acetyl-beta-D-hexosaminides.. The catalysed reaction is N-acetyl-beta-D-galactosaminyl-(1-&gt;4)-beta-D-3-sulfogalactosyl-(1-&gt;4)-beta-D-glucosyl-(1&lt;-&gt;1')-ceramide + H2O = a beta-D-3-sulfogalactosyl-(1-&gt;4)-beta-D-glucosyl-(1&lt;-&gt;1')-ceramide + N-acetyl-beta-D-galactosamine. It carries out the reaction a ganglioside GM2 (d18:1(4E)) + H2O = a ganglioside GM3 (d18:1(4E)) + N-acetyl-beta-D-galactosamine. It catalyses the reaction a ganglioside GM2 + H2O = a ganglioside GM3 + N-acetyl-beta-D-galactosamine. The enzyme catalyses beta-D-GalNAc-(1-&gt;4)-alpha-L-IdoA-(1-&gt;3)-beta-D-GalNAc-4-sulfate-(1-&gt;4)-alpha-L-IdoA-(1-&gt;3)-D-GalNAc-4-sulfate + H2O = alpha-L-IdoA-(1-&gt;3)-beta-D-GalNAc-4-sulfate-(1-&gt;4)-alpha-L-IdoA-(1-&gt;3)-D-GalNAc-4-sulfate + N-acetyl-D-galactosamine. The catalysed reaction is N-acetyl-beta-D-6-sulfogalactosaminyl-(1-&gt;4)-alpha-L-iduronyl-(1-&gt;3)-N-acetyl-D-6-sulfogalactosamine + H2O = alpha-L-iduronyl-(1-&gt;3)-N-acetyl-D-6-sulfogalactosamine + N-acetyl-D-6-sulfogalactosamine. Addition of GM2A stimulates the hydrolysis of sulfated glycosphingolipid SM2 and the ganglioside GM2. In terms of biological role, hydrolyzes the non-reducing end N-acetyl-D-hexosamine and/or sulfated N-acetyl-D-hexosamine of glycoconjugates, such as the oligosaccharide moieties from proteins and neutral glycolipids, or from certain mucopolysaccharides. The isozyme B does not hydrolyze each of these substrates, however hydrolyzes efficiently neutral oligosaccharide. Only the isozyme A is responsible for the degradation of GM2 gangliosides in the presence of GM2A. During fertilization is responsible, at least in part, for the zona block to polyspermy. Present in the cortical granules of non-activated oocytes, is exocytosed during the cortical reaction in response to oocyte activation and inactivates the sperm galactosyltransferase-binding site, accounting for the block in sperm binding to the zona pellucida. The chain is Beta-hexosaminidase subunit beta from Homo sapiens (Human).